Reading from the N-terminus, the 312-residue chain is Ribosomal RNA small subunit methyltransferase H (312 aa).

Residues 34-36 (GGH), Asp54, Phe78, Asp100, and Gln107 contribute to the S-adenosyl-L-methionine site.

The protein belongs to the methyltransferase superfamily. RsmH family.

The protein resides in the cytoplasm. It catalyses the reaction cytidine(1402) in 16S rRNA + S-adenosyl-L-methionine = N(4)-methylcytidine(1402) in 16S rRNA + S-adenosyl-L-homocysteine + H(+). Its function is as follows. Specifically methylates the N4 position of cytidine in position 1402 (C1402) of 16S rRNA. This Salmonella choleraesuis (strain SC-B67) protein is Ribosomal RNA small subunit methyltransferase H.